The chain runs to 387 residues: Protein RecA, chromosomal (387 aa).

Residue 80–87 participates in ATP binding; it reads GPESSGKT. Residues 352 to 387 form a disordered region; the sequence is EVAETTEDTSTKAKATKAKKEEKVVETEEIELELED. Acidic residues predominate over residues 378 to 387; that stretch reads TEEIELELED.

The protein belongs to the RecA family.

The protein localises to the cytoplasm. In terms of biological role, can catalyze the hydrolysis of ATP in the presence of single-stranded DNA, the ATP-dependent uptake of single-stranded DNA by duplex DNA, and the ATP-dependent hybridization of homologous single-stranded DNAs. It interacts with LexA causing its activation and leading to its autocatalytic cleavage. The protein is Protein RecA, chromosomal of Lactococcus lactis subsp. lactis (strain IL1403) (Streptococcus lactis).